A 101-amino-acid polypeptide reads, in one-letter code: Small ribosomal subunit protein uS14 (101 aa).

Belongs to the universal ribosomal protein uS14 family. In terms of assembly, part of the 30S ribosomal subunit. Contacts proteins S3 and S10.

Its function is as follows. Binds 16S rRNA, required for the assembly of 30S particles and may also be responsible for determining the conformation of the 16S rRNA at the A site. This chain is Small ribosomal subunit protein uS14, found in Chlamydia trachomatis serovar L2 (strain ATCC VR-902B / DSM 19102 / 434/Bu).